Reading from the N-terminus, the 262-residue chain is RNA-binding protein 7 (262 aa).

At glycine 2 the chain carries N-acetylglycine. In terms of domain architecture, RRM spans 10–87 (RTLFVGNLET…RPIKIQFRAG (78 aa)). 2 ZCCHC8 binding regions span residues 25-35 (LLFELFHQAGP) and 59-76 (HEVS…IKLF). A disordered region spans residues 95–121 (VSLSYPQHHVGNSSPTSTSPSRTVDNM). A phosphoserine mark is found at serine 133 and serine 134. Arginine 149 carries the post-translational modification Omega-N-methylarginine. Disordered regions lie at residues 159–212 (SPHL…HYSR) and 242–262 (SHDY…SSRH). The segment covering 165–194 (SGFSPSAQSHNHTFNQSSSSQWRQDTPSSQ) has biased composition (polar residues). Residue serine 201 is modified to Phosphoserine. Residues 242–253 (SHDYDNRRDSGR) are compositionally biased toward basic and acidic residues.

As to quaternary structure, component of the nuclear exosome targeting (NEXT) complex composed of MTREX, ZCCHC8, and RBM7 that directs a subset of non-coding short-lived RNAs for exosomal degradation. Interacts with ZCCHC8 and SF3B2/SAP145. Binds to MTREX through ZCCHC8. Interacts with YWHAE and YWHAZ; these interactions are stress-dependent and RBM7 phosphorylation dependent; release RNA from the NEXT complex and may affect RNA targeting to the nuclear RNA exosomome for degradation. Interacts with MEPCE and LARP7, the core subunits of 7SK snRNP; upon genotoxic stress this interaction is enhanced, triggering the release of inactive P-TEFb complex from the core and P-TEFb complex activation. In terms of processing, phosphorylated at Ser-133 by MAPK14/p38-alpha-activated MAPKAPK2/MK2; this phosphorylation is stress-dependent; this phosphorylation decreases its RNA-binding capacity therefore affecting RNA nuclear exosome-mediated degradation. This phosphorylation mediates YWHAE and YWHAZ interactions.

The protein resides in the nucleus. The protein localises to the nucleoplasm. Its function is as follows. RNA-binding subunit of the trimeric nuclear exosome targeting (NEXT) complex, a complex that functions as an RNA exosome cofactor that directs a subset of non-coding short-lived RNAs for exosomal degradation. NEXT is involved in surveillance and turnover of aberrant transcripts and non-coding RNAs. Binds preferentially polyuridine sequences and associates with newly synthesized RNAs, including pre-mRNAs and short-lived exosome substrates such as promoter upstream transcripts (PROMPTs), enhancer RNAs (eRNAs), and 3'-extended products from small nuclear RNAs (snRNAs). Participates in several biological processes including DNA damage response (DDR) and stress response. During stress response, activation of the p38MAPK-MK2 pathway decreases RBM7-RNA-binding and subsequently the RNA exosome degradation activities, thereby modulating the turnover of non-coding transcriptome. Participates in DNA damage response (DDR), through its interaction with MEPCE and LARP7, the core subunits of 7SK snRNP complex, that release the positive transcription elongation factor b (P-TEFb) complex from the 7SK snRNP. In turn, activation of P-TEFb complex induces the transcription of P-TEFb-dependent DDR genes to promote cell viability. In Bos taurus (Bovine), this protein is RNA-binding protein 7.